We begin with the raw amino-acid sequence, 202 residues long: Small ribosomal subunit protein uS4 (202 aa).

An S4 RNA-binding domain is found at 90–152 (MRLDNTVFRL…ERSRRLVETN (63 aa)).

This sequence belongs to the universal ribosomal protein uS4 family. In terms of assembly, part of the 30S ribosomal subunit. Contacts protein S5. The interaction surface between S4 and S5 is involved in control of translational fidelity.

Functionally, one of the primary rRNA binding proteins, it binds directly to 16S rRNA where it nucleates assembly of the body of the 30S subunit. With S5 and S12 plays an important role in translational accuracy. In Thermosynechococcus vestitus (strain NIES-2133 / IAM M-273 / BP-1), this protein is Small ribosomal subunit protein uS4.